The chain runs to 177 residues: Large ribosomal subunit protein uL6 (177 aa).

Belongs to the universal ribosomal protein uL6 family. Part of the 50S ribosomal subunit.

This protein binds to the 23S rRNA, and is important in its secondary structure. It is located near the subunit interface in the base of the L7/L12 stalk, and near the tRNA binding site of the peptidyltransferase center. This Polynucleobacter asymbioticus (strain DSM 18221 / CIP 109841 / QLW-P1DMWA-1) (Polynucleobacter necessarius subsp. asymbioticus) protein is Large ribosomal subunit protein uL6.